A 179-amino-acid polypeptide reads, in one-letter code: Large ribosomal subunit protein uL5 (179 aa).

The protein belongs to the universal ribosomal protein uL5 family. Part of the 50S ribosomal subunit; part of the 5S rRNA/L5/L18/L25 subcomplex. Contacts the 5S rRNA and the P site tRNA. Forms a bridge to the 30S subunit in the 70S ribosome.

Functionally, this is one of the proteins that bind and probably mediate the attachment of the 5S RNA into the large ribosomal subunit, where it forms part of the central protuberance. In the 70S ribosome it contacts protein S13 of the 30S subunit (bridge B1b), connecting the 2 subunits; this bridge is implicated in subunit movement. Contacts the P site tRNA; the 5S rRNA and some of its associated proteins might help stabilize positioning of ribosome-bound tRNAs. This chain is Large ribosomal subunit protein uL5, found in Alcanivorax borkumensis (strain ATCC 700651 / DSM 11573 / NCIMB 13689 / SK2).